We begin with the raw amino-acid sequence, 340 residues long: Mitochondrial calcium uniporter regulator 1 (340 aa).

Residues 1–44 form a disordered region; the sequence is MDSGSVAAERPRRTPSRQRLPSSGCGVPARPGVSTLPGGRSWLR. Over 1 to 54 the chain is Mitochondrial intermembrane; that stretch reads MDSGSVAAERPRRTPSRQRLPSSGCGVPARPGVSTLPGGRSWLRPRGRAARASP. Residues 55–74 form a helical membrane-spanning segment; sequence LLFLLLVPSPRLAATATATA. At 75 to 316 the chain is on the mitochondrial matrix side; sequence PRRTLAERSR…KTMLEAHKLD (242 aa). Residues 197-291 adopt a coiled-coil conformation; the sequence is ALQQVLSKIA…VSLHAQQDRA (95 aa). N6-acetyllysine is present on lysine 204. The chain crosses the membrane as a helical span at residues 317 to 339; sequence TIKYLAGSVFTCLTVALGFYRLW. Residue isoleucine 340 is a topological domain, mitochondrial intermembrane.

This sequence belongs to the CCDC90 family. In terms of assembly, interacts (via coiled coil regions) with MCU; the interaction is direct. Interacts with SMDT1/EMRE; the interaction is direct. Interacts with PPIF.

It is found in the mitochondrion inner membrane. In terms of biological role, key regulator of mitochondrial calcium uniporter (MCU) required for calcium entry into mitochondrion. Plays a direct role in uniporter-mediated calcium uptake via a direct interaction with MCU. Probably involved in the assembly of the membrane components of the uniporter complex (uniplex). The polypeptide is Mitochondrial calcium uniporter regulator 1 (Mus musculus (Mouse)).